The sequence spans 199 residues: uncharacterized protein (199 aa).

Transmembrane regions (helical) follow at residues L27–A47, L55–L75, and L172–L192.

The protein resides in the cell membrane. This is an uncharacterized protein from Synechocystis sp. (strain ATCC 27184 / PCC 6803 / Kazusa).